The following is a 349-amino-acid chain: ATPase GET3 (349 aa).

ATP is bound at residue lysine 26–threonine 33. Aspartate 57 is an active-site residue. Glutamate 242 and asparagine 269 together coordinate ATP. Zn(2+) contacts are provided by cysteine 281 and cysteine 284.

Belongs to the arsA ATPase family. Homodimer. Component of the Golgi to ER traffic (GET) complex, which is composed of GET1, GET2 and GET3. Within the complex, GET1 and GET2 form a heterotetramer which is stabilized by phosphatidylinositol binding and which binds to the GET3 homodimer. Interacts with the chloride channel protein GEF1.

The protein localises to the cytoplasm. The protein resides in the endoplasmic reticulum. Its subcellular location is the golgi apparatus. Functionally, ATPase required for the post-translational delivery of tail-anchored (TA) proteins to the endoplasmic reticulum. Recognizes and selectively binds the transmembrane domain of TA proteins in the cytosol. This complex then targets to the endoplasmic reticulum by membrane-bound receptors GET1 and GET2, where the tail-anchored protein is released for insertion. This process is regulated by ATP binding and hydrolysis. ATP binding drives the homodimer towards the closed dimer state, facilitating recognition of newly synthesized TA membrane proteins. ATP hydrolysis is required for insertion. Subsequently, the homodimer reverts towards the open dimer state, lowering its affinity for the GET1-GET2 receptor, and returning it to the cytosol to initiate a new round of targeting. Cooperates with the HDEL receptor ERD2 to mediate the ATP-dependent retrieval of resident ER proteins that contain a C-terminal H-D-E-L retention signal from the Golgi to the ER. Involved in low-level resistance to the oxyanions arsenite and arsenate, and in heat tolerance. The sequence is that of ATPase GET3 from Candida tropicalis (strain ATCC MYA-3404 / T1) (Yeast).